We begin with the raw amino-acid sequence, 469 residues long: Ectonucleoside triphosphate diphosphohydrolase 5 (469 aa).

The N-terminal stretch at 1–24 (MATPWGAVFFLLMIACAGSTVFYR) is a signal peptide. Glutamate 172 (proton acceptor) is an active-site residue. A glycan (N-linked (GlcNAc...) asparagine) is linked at asparagine 232. 2 disulfide bridges follow: cysteine 272–cysteine 303 and cysteine 363–cysteine 377.

It belongs to the GDA1/CD39 NTPase family. Monomer; active form. Homodimer; disulfide-linked. Homodimers are enzymatically inactive. Ca(2+) is required as a cofactor. The cofactor is Mg(2+). In terms of processing, N-glycosylated; high-mannose type. Expressed in fetal cells and most adult tissues.

It localises to the endoplasmic reticulum. The protein resides in the secreted. It carries out the reaction a ribonucleoside 5'-diphosphate + H2O = a ribonucleoside 5'-phosphate + phosphate + H(+). The catalysed reaction is GDP + H2O = GMP + phosphate + H(+). It catalyses the reaction UDP + H2O = UMP + phosphate + H(+). The enzyme catalyses IDP + H2O = IMP + phosphate + H(+). It carries out the reaction CDP + H2O = CMP + phosphate + H(+). The catalysed reaction is ADP + H2O = AMP + phosphate + H(+). Its pathway is protein modification; protein glycosylation. Hydrolyzes nucleoside diphosphates with a preference for GDP, IDP and UDP compared to ADP and CDP. In the lumen of the endoplasmic reticulum, hydrolyzes UDP that acts as an end-product feedback inhibitor of the UDP-Glc:glycoprotein glucosyltransferases. UMP can be transported back by an UDP-sugar antiporter to the cytosol where it is consumed to regenerate UDP-glucose. Therefore, it positively regulates protein reglucosylation by clearing UDP from the ER lumen and by promoting the regeneration of UDP-glucose. Protein reglucosylation is essential to proper glycoprotein folding and quality control in the ER. This chain is Ectonucleoside triphosphate diphosphohydrolase 5 (ENTPD5), found in Mesocricetus auratus (Golden hamster).